The primary structure comprises 175 residues: MSIFSIVTAPDERLKQKSKPVLECTDQTRKFMHDMLETMYNADGAGLAAVQVGILLRILVIDIKEYDPVERPKDFYPLFIVNPEIIEKSTELVTANEGCISLPKQRIEVTRPESVKIRYLDYHGKSQELKANDWLARVIQHEYDHLEGKLMVDYLSNLKRDVVLRKLKKLKNNIV.

Residues C99 and H141 each contribute to the Fe cation site. Residue E142 is part of the active site. H145 is a Fe cation binding site.

The protein belongs to the polypeptide deformylase family. Requires Fe(2+) as cofactor.

It carries out the reaction N-terminal N-formyl-L-methionyl-[peptide] + H2O = N-terminal L-methionyl-[peptide] + formate. Removes the formyl group from the N-terminal Met of newly synthesized proteins. Requires at least a dipeptide for an efficient rate of reaction. N-terminal L-methionine is a prerequisite for activity but the enzyme has broad specificity at other positions. The chain is Peptide deformylase from Rickettsia prowazekii (strain Madrid E).